Here is a 504-residue protein sequence, read N- to C-terminus: Maturase K (504 aa).

The protein belongs to the intron maturase 2 family. MatK subfamily.

Its subcellular location is the plastid. It is found in the chloroplast. Functionally, usually encoded in the trnK tRNA gene intron. Probably assists in splicing its own and other chloroplast group II introns. The chain is Maturase K from Olimarabidopsis pumila (Dwarf rocket).